The following is a 443-amino-acid chain: Ribulose bisphosphate carboxylase large chain (443 aa).

Lysine 7 bears the N6,N6,N6-trimethyllysine mark. Residues asparagine 116 and threonine 166 each coordinate substrate. Lysine 168 acts as the Proton acceptor in catalysis. Lysine 170 contributes to the substrate binding site. The Mg(2+) site is built by lysine 194, aspartate 196, and glutamate 197. An N6-carboxylysine modification is found at lysine 194. The active-site Proton acceptor is the histidine 287. Positions 288, 320, and 372 each coordinate substrate.

The protein belongs to the RuBisCO large chain family. Type I subfamily. In terms of assembly, heterohexadecamer of 8 large chains and 8 small chains; disulfide-linked. The disulfide link is formed within the large subunit homodimers. Mg(2+) serves as cofactor. Post-translationally, the disulfide bond which can form in the large chain dimeric partners within the hexadecamer appears to be associated with oxidative stress and protein turnover.

The protein localises to the plastid. Its subcellular location is the chloroplast. It carries out the reaction 2 (2R)-3-phosphoglycerate + 2 H(+) = D-ribulose 1,5-bisphosphate + CO2 + H2O. The catalysed reaction is D-ribulose 1,5-bisphosphate + O2 = 2-phosphoglycolate + (2R)-3-phosphoglycerate + 2 H(+). RuBisCO catalyzes two reactions: the carboxylation of D-ribulose 1,5-bisphosphate, the primary event in carbon dioxide fixation, as well as the oxidative fragmentation of the pentose substrate in the photorespiration process. Both reactions occur simultaneously and in competition at the same active site. In Abies sachalinensis (Sakhalin fir), this protein is Ribulose bisphosphate carboxylase large chain.